Here is a 286-residue protein sequence, read N- to C-terminus: Putative WUSCHEL-related homeobox 2 (286 aa).

2 disordered regions span residues M1 to T25 and S128 to T152. A DNA-binding region (homeobox; WUS-type) is located at residues G23–L87.

This sequence belongs to the WUS homeobox family.

It localises to the nucleus. In terms of biological role, transcription factor which may be involved in developmental processes. The sequence is that of Putative WUSCHEL-related homeobox 2 (WOX2) from Oryza sativa subsp. indica (Rice).